The sequence spans 350 residues: Mitochondrial glycine transporter (350 aa).

3 Solcar repeats span residues 23–107, 134–218, and 250–334; these read SKPK…LRQC, LSHT…SKKN, and SSIS…LILK. The next 6 membrane-spanning stretches (helical) occupy residues 29-54, 82-108, 140-165, 193-216, 254-280, and 309-327; these read FIAGLASGLSSAILLQPADLLKTRIQ, GTLPSALRTGFGSALYFSSLNALRQCI, LLTGAMARTAAGFIMMPVTVIKVRYE, GFGATAIRDAPYAGLYVVFYEQSK, VNFVSGALAAGLATSITNPFDVVKTRL, and GLGLRMGRKAISSALAWTV.

Belongs to the mitochondrial carrier (TC 2.A.29) family. SLC25A38 subfamily.

The protein resides in the mitochondrion inner membrane. It carries out the reaction glycine(in) = glycine(out). Mitochondrial glycine transporter that imports glycine into the mitochondrial matrix. Plays an important role in providing glycine for the first enzymatic step in heme biosynthesis, the condensation of glycine with succinyl-CoA to produce 5-aminolevulinate (ALA) in the mitochondrial matrix. In Ajellomyces capsulatus (strain NAm1 / WU24) (Darling's disease fungus), this protein is Mitochondrial glycine transporter.